A 252-amino-acid polypeptide reads, in one-letter code: Imidazole glycerol phosphate synthase subunit HisF (252 aa).

Residues D11 and D130 contribute to the active site.

This sequence belongs to the HisA/HisF family. As to quaternary structure, heterodimer of HisH and HisF.

The protein resides in the cytoplasm. It catalyses the reaction 5-[(5-phospho-1-deoxy-D-ribulos-1-ylimino)methylamino]-1-(5-phospho-beta-D-ribosyl)imidazole-4-carboxamide + L-glutamine = D-erythro-1-(imidazol-4-yl)glycerol 3-phosphate + 5-amino-1-(5-phospho-beta-D-ribosyl)imidazole-4-carboxamide + L-glutamate + H(+). Its pathway is amino-acid biosynthesis; L-histidine biosynthesis; L-histidine from 5-phospho-alpha-D-ribose 1-diphosphate: step 5/9. IGPS catalyzes the conversion of PRFAR and glutamine to IGP, AICAR and glutamate. The HisF subunit catalyzes the cyclization activity that produces IGP and AICAR from PRFAR using the ammonia provided by the HisH subunit. In Citrifermentans bemidjiense (strain ATCC BAA-1014 / DSM 16622 / JCM 12645 / Bem) (Geobacter bemidjiensis), this protein is Imidazole glycerol phosphate synthase subunit HisF.